The primary structure comprises 263 residues: uncharacterized protein (263 aa).

The ABC transporter domain occupies 12-247 (LETQNLAIGY…ENLAKIYRTS (236 aa)). 44–51 (GANGAGKS) is an ATP binding site.

Belongs to the ABC transporter superfamily.

This is an uncharacterized protein from Haemophilus influenzae (strain ATCC 51907 / DSM 11121 / KW20 / Rd).